Reading from the N-terminus, the 365-residue chain is tRNA N6-adenosine threonylcarbamoyltransferase (365 aa).

Fe cation-binding residues include His-122 and His-126. Substrate contacts are provided by residues 147-151, Asp-180, Gly-193, and Asn-293; that span reads LVSGG. Asp-321 contributes to the Fe cation binding site. Positions 340 to 365 are disordered; that stretch reads PNEIDTAARPRWPLSERTPATPEHVS.

This sequence belongs to the KAE1 / TsaD family. It depends on Fe(2+) as a cofactor.

The protein localises to the cytoplasm. It catalyses the reaction L-threonylcarbamoyladenylate + adenosine(37) in tRNA = N(6)-L-threonylcarbamoyladenosine(37) in tRNA + AMP + H(+). In terms of biological role, required for the formation of a threonylcarbamoyl group on adenosine at position 37 (t(6)A37) in tRNAs that read codons beginning with adenine. Is involved in the transfer of the threonylcarbamoyl moiety of threonylcarbamoyl-AMP (TC-AMP) to the N6 group of A37, together with TsaE and TsaB. TsaD likely plays a direct catalytic role in this reaction. This is tRNA N6-adenosine threonylcarbamoyltransferase from Gluconobacter oxydans (strain 621H) (Gluconobacter suboxydans).